Here is a 430-residue protein sequence, read N- to C-terminus: Glutamate-1-semialdehyde 2,1-aminomutase (430 aa).

Residue lysine 265 is modified to N6-(pyridoxal phosphate)lysine.

The protein belongs to the class-III pyridoxal-phosphate-dependent aminotransferase family. HemL subfamily. Homodimer. The cofactor is pyridoxal 5'-phosphate.

It localises to the cytoplasm. The enzyme catalyses (S)-4-amino-5-oxopentanoate = 5-aminolevulinate. It functions in the pathway porphyrin-containing compound metabolism; protoporphyrin-IX biosynthesis; 5-aminolevulinate from L-glutamyl-tRNA(Glu): step 2/2. The chain is Glutamate-1-semialdehyde 2,1-aminomutase from Shewanella baltica (strain OS223).